Here is a 307-residue protein sequence, read N- to C-terminus: Putative F-box/LRR-repeat protein 22 (307 aa).

Residues 1–15 show a composition bias toward polar residues; that stretch reads MVTSSSSPPLATSQL. The disordered stretch occupies residues 1 to 26; it reads MVTSSSSPPLATSQLPVMKGEEKPSN. In terms of domain architecture, F-box spans 24–71; it reads PSNWAELPPDLLSSILLRLSPLEILENARKVCRSWRRVSKDPLIWRRI. LRR repeat units lie at residues 108–133, 158–183, 185–210, 212–237, and 244–270; these read WRFQ…RVKG, YCSI…KLVG, WSHL…HLQL, SNGL…DLRQ, and FGDL…DYNY. Residues 279–289 are compositionally biased toward acidic residues; sequence IEDEKGEEEEN. The tract at residues 279–307 is disordered; that stretch reads IEDEKGEEEENYSYGSDDTEYGYRRSADF.

The chain is Putative F-box/LRR-repeat protein 22 (FBL22) from Arabidopsis thaliana (Mouse-ear cress).